A 375-amino-acid chain; its full sequence is Membrane progesterone receptor epsilon (375 aa).

The disordered stretch occupies residues Met-1–Thr-39. The Cytoplasmic portion of the chain corresponds to Met-1–Asn-84. Over residues Pro-15 to Thr-39 the composition is skewed to low complexity. A helical membrane pass occupies residues Phe-85–Leu-105. Residues Gly-106–His-114 lie on the Extracellular side of the membrane. A helical transmembrane segment spans residues Pro-115–Cys-135. Residues Thr-136–Ser-160 lie on the Cytoplasmic side of the membrane. A helical membrane pass occupies residues Tyr-161–Leu-181. At Asp-182–Leu-203 the chain is on the extracellular side. A helical transmembrane segment spans residues Ile-204 to Val-224. Over Ala-225–Arg-241 the chain is Cytoplasmic. Residues Thr-242–Phe-262 traverse the membrane as a helical segment. Over Asp-263–Pro-299 the chain is Extracellular. The helical transmembrane segment at Gly-300–Ile-320 threads the bilayer. Residues Tyr-321–Ala-341 are Cytoplasmic-facing. A helical transmembrane segment spans residues Pro-342 to Ile-362. Residues Arg-363–Lys-375 are Extracellular-facing.

It belongs to the ADIPOR family. In terms of assembly, homodimer.

The protein resides in the cell membrane. In terms of biological role, plasma membrane progesterone (P4) receptor coupled to G proteins. Seems to act through a G(s) mediated pathway. May be involved in regulating rapid P4 signaling in the nervous system. Also binds dehydroepiandrosterone (DHEA), pregnanolone, pregnenolone and allopregnanolone. The chain is Membrane progesterone receptor epsilon from Mus musculus (Mouse).